The primary structure comprises 104 residues: Large ribosomal subunit protein uL24 (104 aa).

Belongs to the universal ribosomal protein uL24 family. Part of the 50S ribosomal subunit.

One of two assembly initiator proteins, it binds directly to the 5'-end of the 23S rRNA, where it nucleates assembly of the 50S subunit. Functionally, one of the proteins that surrounds the polypeptide exit tunnel on the outside of the subunit. The sequence is that of Large ribosomal subunit protein uL24 from Flavobacterium psychrophilum (strain ATCC 49511 / DSM 21280 / CIP 103535 / JIP02/86).